Reading from the N-terminus, the 177-residue chain is MSGTPILRVERLTREAFAPFGDVIALEGARHFPINGGTTERFHDLATIDVCADGGRPLVSVFRAQPRAVPVAITLMERHPHGSQAFIPLAAVSRYAIVVAPAGEFRPDAMRAFLAEGWQGVNYAKGVWHHPLLALDAVSDFVIVDRGGPQPNCDEIPLECAWALEFEPACAGAEGLS.

Belongs to the ureidoglycolate lyase family. Homodimer. Ni(2+) is required as a cofactor.

It carries out the reaction (S)-ureidoglycolate = urea + glyoxylate. The protein operates within nitrogen metabolism; (S)-allantoin degradation. Catalyzes the catabolism of the allantoin degradation intermediate (S)-ureidoglycolate, generating urea and glyoxylate. Involved in the utilization of allantoin as nitrogen source. The polypeptide is Ureidoglycolate lyase (Burkholderia cepacia (Pseudomonas cepacia)).